A 1172-amino-acid chain; its full sequence is Structural maintenance of chromosomes protein 2 (1172 aa).

Position 32-39 (32-39) interacts with ATP; the sequence is GLNGSGKS. Coiled coils occupy residues 172 to 204 and 258 to 507; these read RMFEERKEKAFRTMQRKEAKVEEINTLLREEIE and SHIA…AYME. An SMC hinge domain is found at 520–640; sequence SKVKGLVAQL…CDTPESAKKV (121 aa). Residues 676–941 are a coiled coil; sequence LLQIQKLNSL…INHLEKENDW (266 aa).

Belongs to the SMC family. SMC2 subfamily. As to quaternary structure, forms a heterodimer with cut3/smc4. Component of the condensin complex, which contains the cut3 and cut14 heterodimer, and three non smc subunits that probably regulate the complex: cnd1, cnd2 and cnd3.

The protein resides in the nucleus. Its subcellular location is the cytoplasm. It is found in the chromosome. Central component of the condensin complex, a complex required for conversion of interphase chromatin into mitotic-like condense chromosomes. The condensin complex probably introduces positive supercoils into relaxed DNA in the presence of type I topoisomerases and converts nicked DNA into positive knotted forms in the presence of type II topoisomerases. The sequence is that of Structural maintenance of chromosomes protein 2 (cut14) from Schizosaccharomyces pombe (strain 972 / ATCC 24843) (Fission yeast).